Reading from the N-terminus, the 415-residue chain is MLLLLALVSVALAHASEEHFDGNRVYRVSVHGEDHVNLIQELANTKEIDFWKPDSATQVKPLTTVDFHVKAEDVADVENFLEENEVHYEVLISNVRNALESQFDSHTRASGHSYTKYNKWETIEAWIQQVATDNPDLVTQSVIGTTFEGRNMYVLKIGKTRPNKPAIFIDCGFHAREWISPAFCQWFVREAVRTYNQEIHMKQLLDELDFYVLPVVNIDGYVYTWTKDRMWRKTRSTMAGSSCLGVRPNRNFNAGWCEVGASRSPCSETYCGPAPESEKETKALADFIRNNLSTIKAYLTIHSYSQMMLYPYSYDYKLPENYEELNALVKGAAKELATLHGTKYTYGPGATTIYPAAGGSDDWSYDQGIKYSFTFELRDTGFFGFLLPESQIRQTCEETMLAVKYIANYVREHLY.

The N-terminal stretch at 1–13 is a signal peptide; it reads MLLLLALVSVALA. Positions 14–108 are cleaved as a propeptide — activation peptide; sequence HASEEHFDGN…LESQFDSHTR (95 aa). In terms of domain architecture, Peptidase M14 spans 116 to 410; the sequence is KYNKWETIEA…LAVKYIANYV (295 aa). A disulfide bond links Cys-171 and Cys-184. 2 residues coordinate Zn(2+): His-174 and Glu-177. Residues 174-177, Arg-232, and 249-250 contribute to the substrate site; these read HARE and NR. 2 disulfides stabilise this stretch: Cys-243–Cys-266 and Cys-257–Cys-271. His-302 is a Zn(2+) binding site. Substrate-binding positions include 303 to 304 and Tyr-354; that span reads SY. Residue Glu-376 is the Proton donor/acceptor of the active site.

Belongs to the peptidase M14 family. It depends on Zn(2+) as a cofactor.

The protein localises to the secreted. It localises to the zymogen granule lumen. The enzyme catalyses Preferential release of a C-terminal lysine or arginine amino acid.. This chain is Carboxypeptidase B (Cpb1), found in Rattus norvegicus (Rat).